The sequence spans 157 residues: 2-C-methyl-D-erythritol 2,4-cyclodiphosphate synthase (157 aa).

A divalent metal cation is bound by residues aspartate 8 and histidine 10. 4-CDP-2-C-methyl-D-erythritol 2-phosphate-binding positions include 8 to 10 (DVH) and 34 to 35 (HS). Histidine 42 serves as a coordination point for a divalent metal cation. 4-CDP-2-C-methyl-D-erythritol 2-phosphate is bound by residues 56-58 (DIG), 61-65 (FPDTD), 132-135 (TTTE), phenylalanine 139, and arginine 142.

This sequence belongs to the IspF family. As to quaternary structure, homotrimer. A divalent metal cation serves as cofactor.

The catalysed reaction is 4-CDP-2-C-methyl-D-erythritol 2-phosphate = 2-C-methyl-D-erythritol 2,4-cyclic diphosphate + CMP. It functions in the pathway isoprenoid biosynthesis; isopentenyl diphosphate biosynthesis via DXP pathway; isopentenyl diphosphate from 1-deoxy-D-xylulose 5-phosphate: step 4/6. In terms of biological role, involved in the biosynthesis of isopentenyl diphosphate (IPP) and dimethylallyl diphosphate (DMAPP), two major building blocks of isoprenoid compounds. Catalyzes the conversion of 4-diphosphocytidyl-2-C-methyl-D-erythritol 2-phosphate (CDP-ME2P) to 2-C-methyl-D-erythritol 2,4-cyclodiphosphate (ME-CPP) with a corresponding release of cytidine 5-monophosphate (CMP). In Pseudomonas putida (strain W619), this protein is 2-C-methyl-D-erythritol 2,4-cyclodiphosphate synthase.